The sequence spans 642 residues: Threonine--tRNA ligase (642 aa).

The region spanning 1-61 (MPVITLPDGS…ETDAELSIIT (61 aa)) is the TGS domain. The segment at 243-534 (DHRKIGKQLD…LIEEYAGRFP (292 aa)) is catalytic. Residues Cys-334, His-385, and His-511 each coordinate Zn(2+).

This sequence belongs to the class-II aminoacyl-tRNA synthetase family. As to quaternary structure, homodimer. Zn(2+) serves as cofactor.

The protein resides in the cytoplasm. It catalyses the reaction tRNA(Thr) + L-threonine + ATP = L-threonyl-tRNA(Thr) + AMP + diphosphate + H(+). Its function is as follows. Catalyzes the attachment of threonine to tRNA(Thr) in a two-step reaction: L-threonine is first activated by ATP to form Thr-AMP and then transferred to the acceptor end of tRNA(Thr). Also edits incorrectly charged L-seryl-tRNA(Thr). The protein is Threonine--tRNA ligase of Shewanella sp. (strain MR-7).